We begin with the raw amino-acid sequence, 210 residues long: Probable nicotinate-nucleotide adenylyltransferase (210 aa).

It belongs to the NadD family.

The catalysed reaction is nicotinate beta-D-ribonucleotide + ATP + H(+) = deamido-NAD(+) + diphosphate. It participates in cofactor biosynthesis; NAD(+) biosynthesis; deamido-NAD(+) from nicotinate D-ribonucleotide: step 1/1. Its function is as follows. Catalyzes the reversible adenylation of nicotinate mononucleotide (NaMN) to nicotinic acid adenine dinucleotide (NaAD). The chain is Probable nicotinate-nucleotide adenylyltransferase from Streptococcus mutans serotype c (strain ATCC 700610 / UA159).